The following is a 124-amino-acid chain: Fluoride-specific ion channel FluC (124 aa).

4 consecutive transmembrane segments (helical) span residues 1 to 21, 36 to 56, 66 to 86, and 94 to 114; these read MAYL…HFIN, TFFI…YLAF, LFLM…SLDA, and AVGL…AGLF. Na(+) is bound by residues G74 and T77.

Belongs to the fluoride channel Fluc/FEX (TC 1.A.43) family.

The protein resides in the cell inner membrane. It catalyses the reaction fluoride(in) = fluoride(out). Na(+) is not transported, but it plays an essential structural role and its presence is essential for fluoride channel function. In terms of biological role, fluoride-specific ion channel. Important for reducing fluoride concentration in the cell, thus reducing its toxicity. This Rhodopseudomonas palustris (strain ATCC BAA-98 / CGA009) protein is Fluoride-specific ion channel FluC.